The sequence spans 67 residues: Small ribosomal subunit protein eS17 (67 aa).

It belongs to the eukaryotic ribosomal protein eS17 family.

This Thermococcus gammatolerans (strain DSM 15229 / JCM 11827 / EJ3) protein is Small ribosomal subunit protein eS17.